The sequence spans 68 residues: MPHFLDWFVPVYLVISVLILVGFGACIYYFEPGLQEAHKWRMQRPLVDRDLRKTLMVRDNLAFGGPEV.

The chain crosses the membrane as a helical span at residues 7-27; it reads WFVPVYLVISVLILVGFGACI.

Highly expressed in brain.

It is found in the nucleus. It localises to the cytoplasm. Its subcellular location is the membrane. Plays a role in the regulation of neuron maturation. This chain is Small integral membrane protein 45, found in Homo sapiens (Human).